The chain runs to 501 residues: Ribose import ATP-binding protein RbsA (501 aa).

ABC transporter domains are found at residues 5 to 241 and 252 to 498; these read LSLE…VGRK and LRND…TGGV. Residue 37-44 coordinates ATP; the sequence is GENGAGKS.

This sequence belongs to the ABC transporter superfamily. Ribose importer (TC 3.A.1.2.1) family. The complex is composed of an ATP-binding protein (RbsA), two transmembrane proteins (RbsC) and a solute-binding protein (RbsB).

It localises to the cell inner membrane. It carries out the reaction D-ribose(out) + ATP + H2O = D-ribose(in) + ADP + phosphate + H(+). In terms of biological role, part of the ABC transporter complex RbsABC involved in ribose import. Responsible for energy coupling to the transport system. This chain is Ribose import ATP-binding protein RbsA, found in Hahella chejuensis (strain KCTC 2396).